Here is a 310-residue protein sequence, read N- to C-terminus: Oxygen-dependent coproporphyrinogen-III oxidase (310 aa).

A substrate-binding site is contributed by serine 93. Histidine 97 and histidine 107 together coordinate a divalent metal cation. Histidine 107 functions as the Proton donor in the catalytic mechanism. Residue 109-111 coordinates substrate; sequence NVR. Residues histidine 146 and histidine 176 each contribute to the a divalent metal cation site. An important for dimerization region spans residues 241–276; sequence YVEFNLVYDRGTLFGLQSGGRTESILMSLPPQVRWS. 259-261 is a substrate binding site; that stretch reads GGR.

This sequence belongs to the aerobic coproporphyrinogen-III oxidase family. As to quaternary structure, homodimer. A divalent metal cation is required as a cofactor.

It is found in the cytoplasm. It catalyses the reaction coproporphyrinogen III + O2 + 2 H(+) = protoporphyrinogen IX + 2 CO2 + 2 H2O. It participates in porphyrin-containing compound metabolism; protoporphyrin-IX biosynthesis; protoporphyrinogen-IX from coproporphyrinogen-III (O2 route): step 1/1. Its function is as follows. Involved in the heme biosynthesis. Catalyzes the aerobic oxidative decarboxylation of propionate groups of rings A and B of coproporphyrinogen-III to yield the vinyl groups in protoporphyrinogen-IX. This chain is Oxygen-dependent coproporphyrinogen-III oxidase, found in Pseudomonas fluorescens (strain SBW25).